A 216-amino-acid polypeptide reads, in one-letter code: Large ribosomal subunit protein uL24m (216 aa).

The transit peptide at 1-9 directs the protein to the mitochondrion; sequence MRLSALLAL. Ser-24 carries the phosphoserine modification. The 34-residue stretch at 56 to 89 folds into the KOW domain; it reads LFCGDTVEILEGKDAGKQGKVVQVIRQRNWVVVG.

This sequence belongs to the universal ribosomal protein uL24 family. As to quaternary structure, component of the mitochondrial large ribosomal subunit (mt-LSU). Mature mammalian 55S mitochondrial ribosomes consist of a small (28S) and a large (39S) subunit. The 28S small subunit contains a 12S ribosomal RNA (12S mt-rRNA) and 30 different proteins. The 39S large subunit contains a 16S rRNA (16S mt-rRNA), a copy of mitochondrial valine transfer RNA (mt-tRNA(Val)), which plays an integral structural role, and 52 different proteins.

Its subcellular location is the mitochondrion. This is Large ribosomal subunit protein uL24m (MRPL24) from Homo sapiens (Human).